Consider the following 289-residue polypeptide: Shikimate dehydrogenase (NADP(+)) (289 aa).

Residues 22–24 and threonine 69 each bind shikimate; that span reads SRS. Residue lysine 73 is the Proton acceptor of the active site. Glutamate 85 provides a ligand contact to NADP(+). 2 residues coordinate shikimate: asparagine 94 and aspartate 109. NADP(+)-binding positions include 134 to 138, 158 to 163, and isoleucine 226; these read GAGGA and NRTLSR. Shikimate is bound at residue tyrosine 228. Glycine 249 serves as a coordination point for NADP(+).

The protein belongs to the shikimate dehydrogenase family. Homodimer.

The enzyme catalyses shikimate + NADP(+) = 3-dehydroshikimate + NADPH + H(+). It participates in metabolic intermediate biosynthesis; chorismate biosynthesis; chorismate from D-erythrose 4-phosphate and phosphoenolpyruvate: step 4/7. In terms of biological role, involved in the biosynthesis of the chorismate, which leads to the biosynthesis of aromatic amino acids. Catalyzes the reversible NADPH linked reduction of 3-dehydroshikimate (DHSA) to yield shikimate (SA). This chain is Shikimate dehydrogenase (NADP(+)), found in Brucella melitensis biotype 2 (strain ATCC 23457).